The primary structure comprises 400 residues: Chaperone protein DnaJ (400 aa).

Residues 4–69 (DYYETLGVTR…DKRRRYDQFG (66 aa)) form the J domain. Residues 156 to 237 (GVEKTLKVKR…CYGEGIKLGE (82 aa)) form a CR-type zinc finger. Positions 169, 172, 185, 188, 211, 214, 225, and 228 each coordinate Zn(2+). CXXCXGXG motif repeat units follow at residues 169-176 (CEVCNGTG), 185-192 (CQTCHGSG), 211-218 (CPTCGGEG), and 225-232 (CTACYGEG).

This sequence belongs to the DnaJ family. As to quaternary structure, homodimer. Requires Zn(2+) as cofactor.

Its subcellular location is the cytoplasm. In terms of biological role, participates actively in the response to hyperosmotic and heat shock by preventing the aggregation of stress-denatured proteins and by disaggregating proteins, also in an autonomous, DnaK-independent fashion. Unfolded proteins bind initially to DnaJ; upon interaction with the DnaJ-bound protein, DnaK hydrolyzes its bound ATP, resulting in the formation of a stable complex. GrpE releases ADP from DnaK; ATP binding to DnaK triggers the release of the substrate protein, thus completing the reaction cycle. Several rounds of ATP-dependent interactions between DnaJ, DnaK and GrpE are required for fully efficient folding. Also involved, together with DnaK and GrpE, in the DNA replication of plasmids through activation of initiation proteins. In Chlorobium chlorochromatii (strain CaD3), this protein is Chaperone protein DnaJ.